The following is a 346-amino-acid chain: UDP-3-O-acylglucosamine N-acyltransferase (346 aa).

The Proton acceptor role is filled by His-240.

This sequence belongs to the transferase hexapeptide repeat family. LpxD subfamily. As to quaternary structure, homotrimer.

The catalysed reaction is a UDP-3-O-[(3R)-3-hydroxyacyl]-alpha-D-glucosamine + a (3R)-hydroxyacyl-[ACP] = a UDP-2-N,3-O-bis[(3R)-3-hydroxyacyl]-alpha-D-glucosamine + holo-[ACP] + H(+). The protein operates within bacterial outer membrane biogenesis; LPS lipid A biosynthesis. In terms of biological role, catalyzes the N-acylation of UDP-3-O-acylglucosamine using 3-hydroxyacyl-ACP as the acyl donor. Is involved in the biosynthesis of lipid A, a phosphorylated glycolipid that anchors the lipopolysaccharide to the outer membrane of the cell. The sequence is that of UDP-3-O-acylglucosamine N-acyltransferase from Bacteroides thetaiotaomicron (strain ATCC 29148 / DSM 2079 / JCM 5827 / CCUG 10774 / NCTC 10582 / VPI-5482 / E50).